Here is a 931-residue protein sequence, read N- to C-terminus: Scaffold attachment factor B1 (931 aa).

Residues 1–24 (MAETLSGLGDSGAASAAAVSSAAS) show a composition bias toward low complexity. Residues 1–35 (MAETLSGLGDSGAASAAAVSSAASETGTRRLSDLR) form a disordered region. The residue at position 2 (alanine 2) is an N-acetylalanine. Residues serine 24 and serine 55 each carry the phosphoserine modification. The region spanning 31–65 (LSDLRVIDLRAELRKRNLTSSGNKSVLMERLKKAI) is the SAP domain. Residues 64 to 121 (AIEEEGGNPDEIEVISEGNKKMPKRPSKGKKPEDEGVEDNGLEENSGDGQEDVETSLE) form a disordered region. Residues 67–77 (EEGGNPDEIEV) are compositionally biased toward acidic residues. Position 79 is a phosphoserine (serine 79). Residues 98–118 (EGVEDNGLEENSGDGQEDVET) are compositionally biased toward acidic residues. Residues lysine 171 and lysine 185 each participate in a glycyl lysine isopeptide (Lys-Gly) (interchain with G-Cter in SUMO2) cross-link. Serine 194, serine 196, and serine 208 each carry phosphoserine. 2 disordered regions span residues 205-304 (EEAS…TRCQ) and 316-430 (KREP…GRNF). Basic and acidic residues predominate over residues 224–233 (CKSEPVKEEG). Residue lysine 230 forms a Glycyl lysine isopeptide (Lys-Gly) (interchain with G-Cter in SUMO) linkage. Over residues 267–287 (EEEEEEEEEEEQEEEQEEEGD) the composition is skewed to acidic residues. Residue lysine 316 forms a Glycyl lysine isopeptide (Lys-Gly) (interchain with G-Cter in SUMO) linkage. Polar residues predominate over residues 341-356 (EQSSTAAQLPETTSQE). Residues 368 to 380 (EPRDSKDDVKKFA) show a composition bias toward basic and acidic residues. Residue lysine 403 forms a Glycyl lysine isopeptide (Lys-Gly) (interchain with G-Cter in SUMO2) linkage. A phosphoserine mark is found at serine 405 and serine 406. Over residues 412–423 (DTKRLSREEKGR) the composition is skewed to basic and acidic residues. Residue lysine 414 forms a Glycyl lysine isopeptide (Lys-Gly) (interchain with G-Cter in SUMO2) linkage. Residues 428–506 (RNFWVSGLSS…KMISVEKAKS (79 aa)) form the RRM domain. Serine 437 is subject to Phosphoserine. 2 stretches are compositionally biased toward basic and acidic residues: residues 500 to 573 (SVEK…ERSR) and 581 to 592 (GTERTVVMDKSK). Disordered regions lie at residues 500-663 (SVEK…WERE), 691-720 (RLER…LRRQ), 759-843 (RYHS…PRRD), and 872-931 (RWQG…QQTQ). Glycyl lysine isopeptide (Lys-Gly) (interchain with G-Cter in SUMO2) cross-links involve residues lysine 505, lysine 536, lysine 565, and lysine 592. Positions 550-816 (TDDGSTEKSK…RHGGPERHGR (267 aa)) are interaction with POLR2A; SFRS1; SFRS9 and SFRS10. Residue lysine 600 forms a Glycyl lysine isopeptide (Lys-Gly) (interchain with G-Cter in SUMO1); alternate linkage. A Glycyl lysine isopeptide (Lys-Gly) (interchain with G-Cter in SUMO2); alternate cross-link involves residue lysine 600. Serine 602, serine 604, serine 623, and serine 626 each carry phosphoserine. Positions 603 to 663 (GSKERASKSQ…QRLQAQWERE (61 aa)) are enriched in basic and acidic residues. A Nuclear localization signal motif is present at residues 621–638 (KRSVVSFDKVKESRKSRD). An N6-acetyllysine modification is found at lysine 629. Basic and acidic residues predominate over residues 759-820 (RYHSDFSRQD…PERHGRDSRD (62 aa)). Arginine 834 is subject to Omega-N-methylarginine. An asymmetric dimethylarginine mark is found at arginine 892, arginine 898, arginine 908, and arginine 914.

Monomer and homodimer. Interacts with KHDRBS3. Interacts with CLK2. Interacts with POLR2A, ASF/SRSF1, SRp30c/SRFS9 and TRA2B/SFRS10. Interacts with SRPK1 and inhibits its activity. Interacts with RBMX. Interacts with FUS. Interacts with ZBED4. In terms of processing, phosphorylated by CDC-like kinase 2 (CLK2). Sumoylated by PIAS1 with SUMO1 and SUMO2/3, desumoylated by SENP1. Sumoylation is required for transcriptional repressor activity.

It is found in the nucleus. Functionally, binds to scaffold/matrix attachment region (S/MAR) DNA and forms a molecular assembly point to allow the formation of a 'transcriptosomal' complex (consisting of SR proteins and RNA polymerase II) coupling transcription and RNA processing. Functions as an estrogen receptor corepressor and can also bind to the HSP27 promoter and decrease its transcription. Thereby acts as a negative regulator of cell proliferation. When associated with RBMX, binds to and stimulates transcription from the SREBF1 promoter. This Rattus norvegicus (Rat) protein is Scaffold attachment factor B1 (Safb).